A 298-amino-acid chain; its full sequence is O-glycoside alpha-1,2-mannosyltransferase homolog 6 (298 aa).

Glu220 (nucleophile) is an active-site residue.

It belongs to the glycosyltransferase 15 family.

It localises to the cytoplasm. Its subcellular location is the nucleus. In terms of biological role, probable mannosyltransferase involved in O-glycosylation of cell wall and secreted proteins. The protein is O-glycoside alpha-1,2-mannosyltransferase homolog 6 (omh6) of Schizosaccharomyces pombe (strain 972 / ATCC 24843) (Fission yeast).